The sequence spans 309 residues: DNA-directed RNA polymerase subunit alpha (309 aa).

The tract at residues 1–227 is alpha N-terminal domain (alpha-NTD); sequence MTFQVECVES…ALFEPLKNVS (227 aa). The segment at 237–309 is alpha C-terminal domain (alpha-CTD); it reads EPTPESQTPI…GIKLQESKVS (73 aa).

This sequence belongs to the RNA polymerase alpha chain family. In cyanobacteria the RNAP catalytic core is composed of 2 alpha, 1 beta, 1 beta', 1 gamma and 1 omega subunit. When a sigma factor is associated with the core the holoenzyme is formed, which can initiate transcription.

The catalysed reaction is RNA(n) + a ribonucleoside 5'-triphosphate = RNA(n+1) + diphosphate. In terms of biological role, DNA-dependent RNA polymerase catalyzes the transcription of DNA into RNA using the four ribonucleoside triphosphates as substrates. The chain is DNA-directed RNA polymerase subunit alpha from Synechococcus elongatus (strain ATCC 33912 / PCC 7942 / FACHB-805) (Anacystis nidulans R2).